The sequence spans 828 residues: Glycerol-3-phosphate acyltransferase (828 aa).

Positions 304-309 match the HXXXXD motif motif; sequence CHRSHM. Positions 802–828 are disordered; the sequence is SMPAETSNQPEAPETPETPEPEGKTES.

It belongs to the GPAT/DAPAT family.

Its subcellular location is the cell inner membrane. The enzyme catalyses sn-glycerol 3-phosphate + an acyl-CoA = a 1-acyl-sn-glycero-3-phosphate + CoA. The protein operates within phospholipid metabolism; CDP-diacylglycerol biosynthesis; CDP-diacylglycerol from sn-glycerol 3-phosphate: step 1/3. The chain is Glycerol-3-phosphate acyltransferase from Yersinia pseudotuberculosis serotype O:3 (strain YPIII).